The following is a 245-amino-acid chain: Phosphoadenosine 5'-phosphosulfate reductase (245 aa).

C239 (nucleophile; cysteine thiosulfonate intermediate) is an active-site residue.

The protein belongs to the PAPS reductase family. CysH subfamily.

The protein localises to the cytoplasm. The enzyme catalyses [thioredoxin]-disulfide + sulfite + adenosine 3',5'-bisphosphate + 2 H(+) = [thioredoxin]-dithiol + 3'-phosphoadenylyl sulfate. Its pathway is sulfur metabolism; hydrogen sulfide biosynthesis; sulfite from sulfate: step 3/3. Functionally, catalyzes the formation of sulfite from phosphoadenosine 5'-phosphosulfate (PAPS) using thioredoxin as an electron donor. This chain is Phosphoadenosine 5'-phosphosulfate reductase, found in Alkalilimnicola ehrlichii (strain ATCC BAA-1101 / DSM 17681 / MLHE-1).